The sequence spans 168 residues: Protein-export protein SecB (168 aa).

Belongs to the SecB family. In terms of assembly, homotetramer, a dimer of dimers. One homotetramer interacts with 1 SecA dimer.

The protein resides in the cytoplasm. Functionally, one of the proteins required for the normal export of preproteins out of the cell cytoplasm. It is a molecular chaperone that binds to a subset of precursor proteins, maintaining them in a translocation-competent state. It also specifically binds to its receptor SecA. The sequence is that of Protein-export protein SecB from Glaesserella parasuis serovar 5 (strain SH0165) (Haemophilus parasuis).